The sequence spans 455 residues: Bifunctional protein GlmU (455 aa).

The segment at 1–227 (MGLSVIILAA…CEEVQGVNDR (227 aa)) is pyrophosphorylase. UDP-N-acetyl-alpha-D-glucosamine contacts are provided by residues 8-11 (LAAG), Lys22, Gln73, 78-79 (GT), 100-102 (YGD), Gly137, Glu152, Asn167, and Asn225. Residue Asp102 coordinates Mg(2+). Residue Asn225 coordinates Mg(2+). Residues 228 to 248 (WELTKLERYYQRLMAKKLSLA) are linker. Residues 249 to 455 (GVTIIDPERF…KGWHRPTKKE (207 aa)) form an N-acetyltransferase region. The UDP-N-acetyl-alpha-D-glucosamine site is built by Arg332 and Lys350. The active-site Proton acceptor is the His362. Residues Tyr365 and Asn376 each coordinate UDP-N-acetyl-alpha-D-glucosamine. Acetyl-CoA is bound by residues Ala379, 385–386 (NY), Ser404, Ala422, and Arg439.

In the N-terminal section; belongs to the N-acetylglucosamine-1-phosphate uridyltransferase family. This sequence in the C-terminal section; belongs to the transferase hexapeptide repeat family. As to quaternary structure, homotrimer. Requires Mg(2+) as cofactor.

The protein resides in the cytoplasm. The catalysed reaction is alpha-D-glucosamine 1-phosphate + acetyl-CoA = N-acetyl-alpha-D-glucosamine 1-phosphate + CoA + H(+). It carries out the reaction N-acetyl-alpha-D-glucosamine 1-phosphate + UTP + H(+) = UDP-N-acetyl-alpha-D-glucosamine + diphosphate. It functions in the pathway nucleotide-sugar biosynthesis; UDP-N-acetyl-alpha-D-glucosamine biosynthesis; N-acetyl-alpha-D-glucosamine 1-phosphate from alpha-D-glucosamine 6-phosphate (route II): step 2/2. Its pathway is nucleotide-sugar biosynthesis; UDP-N-acetyl-alpha-D-glucosamine biosynthesis; UDP-N-acetyl-alpha-D-glucosamine from N-acetyl-alpha-D-glucosamine 1-phosphate: step 1/1. The protein operates within bacterial outer membrane biogenesis; LPS lipid A biosynthesis. Its function is as follows. Catalyzes the last two sequential reactions in the de novo biosynthetic pathway for UDP-N-acetylglucosamine (UDP-GlcNAc). The C-terminal domain catalyzes the transfer of acetyl group from acetyl coenzyme A to glucosamine-1-phosphate (GlcN-1-P) to produce N-acetylglucosamine-1-phosphate (GlcNAc-1-P), which is converted into UDP-GlcNAc by the transfer of uridine 5-monophosphate (from uridine 5-triphosphate), a reaction catalyzed by the N-terminal domain. This is Bifunctional protein GlmU from Coxiella burnetii (strain CbuG_Q212) (Coxiella burnetii (strain Q212)).